Here is a 312-residue protein sequence, read N- to C-terminus: Ribosomal protein L11 methyltransferase (312 aa).

The S-adenosyl-L-methionine site is built by Thr-164, Gly-185, Asp-207, and Asn-249.

Belongs to the methyltransferase superfamily. PrmA family.

The protein localises to the cytoplasm. The catalysed reaction is L-lysyl-[protein] + 3 S-adenosyl-L-methionine = N(6),N(6),N(6)-trimethyl-L-lysyl-[protein] + 3 S-adenosyl-L-homocysteine + 3 H(+). Its function is as follows. Methylates ribosomal protein L11. The polypeptide is Ribosomal protein L11 methyltransferase (Clostridium novyi (strain NT)).